An 89-amino-acid polypeptide reads, in one-letter code: Small ribosomal subunit protein uS14 (89 aa).

It belongs to the universal ribosomal protein uS14 family. In terms of assembly, part of the 30S ribosomal subunit. Contacts proteins S3 and S10.

Its function is as follows. Binds 16S rRNA, required for the assembly of 30S particles and may also be responsible for determining the conformation of the 16S rRNA at the A site. This chain is Small ribosomal subunit protein uS14, found in Flavobacterium psychrophilum (strain ATCC 49511 / DSM 21280 / CIP 103535 / JIP02/86).